The chain runs to 131 residues: Phosphoribosyl-AMP cyclohydrolase (131 aa).

A Mg(2+)-binding site is contributed by Asp89. Zn(2+) is bound at residue Cys90. Asp91 and Asp93 together coordinate Mg(2+). Zn(2+) is bound by residues Cys106 and Cys113.

It belongs to the PRA-CH family. In terms of assembly, homodimer. The cofactor is Mg(2+). Requires Zn(2+) as cofactor.

It localises to the cytoplasm. It catalyses the reaction 1-(5-phospho-beta-D-ribosyl)-5'-AMP + H2O = 1-(5-phospho-beta-D-ribosyl)-5-[(5-phospho-beta-D-ribosylamino)methylideneamino]imidazole-4-carboxamide. It functions in the pathway amino-acid biosynthesis; L-histidine biosynthesis; L-histidine from 5-phospho-alpha-D-ribose 1-diphosphate: step 3/9. Its function is as follows. Catalyzes the hydrolysis of the adenine ring of phosphoribosyl-AMP. This chain is Phosphoribosyl-AMP cyclohydrolase, found in Bifidobacterium longum (strain DJO10A).